The sequence spans 301 residues: NADH-ubiquinone oxidoreductase chain 1 (301 aa).

A run of 8 helical transmembrane segments spans residues Ile4–Tyr24, Leu62–Pro82, Ile96–Ala116, Leu140–Ile160, Tyr165–Ala185, Leu216–Phe236, Glu247–Ile267, and Leu279–Val299.

It belongs to the complex I subunit 1 family.

The protein resides in the mitochondrion inner membrane. The enzyme catalyses a ubiquinone + NADH + 5 H(+)(in) = a ubiquinol + NAD(+) + 4 H(+)(out). In terms of biological role, core subunit of the mitochondrial membrane respiratory chain NADH dehydrogenase (Complex I) that is believed to belong to the minimal assembly required for catalysis. Complex I functions in the transfer of electrons from NADH to the respiratory chain. The immediate electron acceptor for the enzyme is believed to be ubiquinone. The sequence is that of NADH-ubiquinone oxidoreductase chain 1 (MT-ND1) from Nyctalus noctula (Noctule bat).